The primary structure comprises 54 residues: Conotoxin vc5a (54 aa).

The first 14 residues, 1–14, serve as a signal peptide directing secretion; the sequence is VILLLITSTPSVDA. The propeptide occupies 15-42; the sequence is RLKAKDNMPLASFHDNAKRTLQTRLINT. 4-hydroxyproline is present on Pro-49. At Ile-53 the chain carries Isoleucine amide.

The protein belongs to the conotoxin T superfamily. Contains 2 disulfide bonds that can be either 'C1-C3, C2-C4' or 'C1-C4, C2-C3', since these disulfide connectivities have been observed for conotoxins with cysteine framework V (for examples, see AC P0DQQ7 and AC P81755). As to expression, expressed by the venom duct.

The protein resides in the secreted. This chain is Conotoxin vc5a, found in Conus victoriae (Queen Victoria cone).